We begin with the raw amino-acid sequence, 109 residues long: MFGKGGMGNLMKQAQQMQDKMAKVQEEIARMEVTGEAGAGLVKVTMTGSHSVRKVDIDPSLLEDDKEMLEDLIAAACNDAARRVEENQKERMAEVTGGMQLPPGMKMPF.

This sequence belongs to the YbaB/EbfC family. As to quaternary structure, homodimer.

The protein localises to the cytoplasm. It localises to the nucleoid. Its function is as follows. Binds to DNA and alters its conformation. May be involved in regulation of gene expression, nucleoid organization and DNA protection. The polypeptide is Nucleoid-associated protein Ssed_2851 (Shewanella sediminis (strain HAW-EB3)).